The chain runs to 615 residues: Ras association domain-containing protein 1 homolog (615 aa).

Disordered regions lie at residues 1–29 (MLRS…PTYQ) and 69–89 (SDDE…QSIG). The span at 76–87 (TSSTSSPQSEQS) shows a compositional bias: low complexity. The Phorbol-ester/DAG-type zinc finger occupies 164–214 (NHSFKTHSLLHPTWCDKCGDFIWGILKEALKCEHCNYTCHARCRDLVTLDC). Positions 249 to 268 (PAMSSSTGSDKENGNGNSAG) are disordered. Residues 251–268 (MSSSTGSDKENGNGNSAG) show a composition bias toward polar residues. Residues 396 to 496 (KTTSLRTITS…RALVLQENDT (101 aa)) form the Ras-associating domain. In terms of domain architecture, SARAH spans 498 to 545 (DILWDAFEIPELENFLRILGMEEKQYVFQTQQKYQQYRYHLDAELRQR).

As to quaternary structure, interacts with rab-39 (GTP-bound form). Interacts (via SARAH domain) with cst-1; the interaction is required for the phosphorylation of cst-1. Expressed in the pharynx, epithelial cells, ciliated neurons in the head, body wall muscles, hypodermis, vulva, gonadal sheath cells, tail hypodermis and in coelomocytes. In terms of tissue distribution, expressed in the pharynx, neurons and vulva.

Its subcellular location is the cytoplasm. It localises to the cytoskeleton. In terms of biological role, involved in embryonic morphogenesis. Plays a role in the organization of apical filamentous actin in epithelial cells of the developing embryo. May play a role in let-60-mediated vulval development. May induce nuclear condensation. Positively regulates the oxidative stress response, and this may be in association with the small GTPase rab-39. Not required for muscle integrity. In Caenorhabditis elegans, this protein is Ras association domain-containing protein 1 homolog.